A 210-amino-acid polypeptide reads, in one-letter code: Dephospho-CoA kinase (210 aa).

In terms of domain architecture, DPCK spans 4–202 (WVGLTGGIGS…AFYSGIFASK (199 aa)). Position 12-17 (12-17 (GSGKSA)) interacts with ATP.

The protein belongs to the CoaE family.

The protein resides in the cytoplasm. It carries out the reaction 3'-dephospho-CoA + ATP = ADP + CoA + H(+). The protein operates within cofactor biosynthesis; coenzyme A biosynthesis; CoA from (R)-pantothenate: step 5/5. Its function is as follows. Catalyzes the phosphorylation of the 3'-hydroxyl group of dephosphocoenzyme A to form coenzyme A. The protein is Dephospho-CoA kinase of Neisseria meningitidis serogroup B (strain ATCC BAA-335 / MC58).